The chain runs to 158 residues: Endoribonuclease YbeY (158 aa).

3 residues coordinate Zn(2+): H122, H126, and H132.

It belongs to the endoribonuclease YbeY family. Zn(2+) serves as cofactor.

It is found in the cytoplasm. Functionally, single strand-specific metallo-endoribonuclease involved in late-stage 70S ribosome quality control and in maturation of the 3' terminus of the 16S rRNA. In Bacillus licheniformis (strain ATCC 14580 / DSM 13 / JCM 2505 / CCUG 7422 / NBRC 12200 / NCIMB 9375 / NCTC 10341 / NRRL NRS-1264 / Gibson 46), this protein is Endoribonuclease YbeY.